A 292-amino-acid chain; its full sequence is Protease HtpX (292 aa).

2 helical membrane-spanning segments follow: residues 5–25 (IFLF…VMSV) and 34–54 (SGLL…SLLL). His140 is a Zn(2+) binding site. The active site involves Glu141. Residue His144 coordinates Zn(2+). Transmembrane regions (helical) follow at residues 155–175 (LLQG…GGII) and 193–213 (IIVF…AMWF). Residue Glu218 participates in Zn(2+) binding.

The protein belongs to the peptidase M48B family. The cofactor is Zn(2+).

Its subcellular location is the cell inner membrane. The polypeptide is Protease HtpX (Xanthomonas oryzae pv. oryzae (strain PXO99A)).